Reading from the N-terminus, the 99-residue chain is Large ribosomal subunit protein uL23 (99 aa).

This sequence belongs to the universal ribosomal protein uL23 family. As to quaternary structure, part of the 50S ribosomal subunit. Contacts protein L29, and trigger factor when it is bound to the ribosome.

One of the early assembly proteins it binds 23S rRNA. One of the proteins that surrounds the polypeptide exit tunnel on the outside of the ribosome. Forms the main docking site for trigger factor binding to the ribosome. The sequence is that of Large ribosomal subunit protein uL23 from Hydrogenobaculum sp. (strain Y04AAS1).